The following is a 2549-amino-acid chain: Serine/threonine-protein kinase mTOR (2549 aa).

Residue Met1 is modified to N-acetylmethionine. Positions 1-651 are interaction with NBN; that stretch reads MLGTGPAVAT…HVVSQTAVQV (651 aa). HEAT repeat units follow at residues 16–53, 55–99, 100–137, 138–179, 180–220, 222–276, 277–313, 314–364, 365–409, 410–445, 446–494, 495–529, 530–563, 564–596, 597–636, 637–683, 686–724, 727–766, 769–811, 814–853, 857–893, 894–942, 943–988, 989–1027, 1029–1068, 1069–1105, 1106–1144, 1145–1188, 1189–1225, 1226–1273, 1274–1311, and 1312–1345; these read SSNV…MELR, MSQE…VEGG, NSTR…AMAG, DTFT…AISV, PTFF…LILT, QREP…RISS, MEGE…PRHI, TPFT…CCRD, LMEE…AFTD, TQYL…VAVR, SEFK…RAMG, PGIQ…RQIP, QLKK…GLAH, QLAS…EFEG, HSLT…SIHL, ISGH…DERF, HLAQ…MNPA, MPFL…NAPR, RPYM…VSGL, RKWV…STGY, PYRK…LLGA, LDPY…GNLP, LDEF…KCVQ, FLPQ…KSHI, PYMD…GEFK, LYLP…LFGA, NLDD…RLTE, SLDF…GKKY, QIFI…LADE, EEDP…GAAR, RVSK…QAYN, and PMAR…ELAL. Ser567 carries the post-translational modification Phosphoserine. At Thr1162 the chain carries Phosphothreonine. Lys1218 carries the post-translational modification N6-acetyllysine. The residue at position 1261 (Ser1261) is a Phosphoserine. TPR repeat units lie at residues 1346-1382, 1383-1408, 1409-1442, 1443-1473, 1474-1507, 1508-1541, 1542-1574, 1575-1614, 1615-1649, 1650-1693, 1694-1731, 1732-1786, 1787-1846, 1898-1930, 1931-1970, and 1971-2005; these read TSQD…GIVL, LGER…QKGP, TPAI…HFGE, LEIQ…NKED, PELM…VNDE, TQAK…RDTH, DGAF…LDAE, LTAM…RREI, IRQI…PHED, MRTW…PTAH, PQVT…AQHA, IATE…DRSW, YKAW…STEG, NNLQ…VKAI, QIDT…YHPQ, and ALIY…SNTL. The FAT domain occupies 1382–1982; the sequence is LLGERAAKCR…IYPLTVASKS (601 aa). Residues Lys1662, Lys1702, and Arg1749 each contribute to the 1D-myo-inositol hexakisphosphate site. Residues 1825–1860 show a composition bias toward low complexity; it reads ITNATTAATTAASAAAATSTEGSNSESEAESNENSP. The segment at 1825–1867 is disordered; the sequence is ITNATTAATTAASAAAATSTEGSNSESEAESNENSPTPSPLQK. Residues 2012 to 2144 form a sufficient for interaction with the FKBP1A/rapamycin complex region; sequence VSEELIRVAI…DLELAVPGTY (133 aa). Lys2066 participates in a covalent cross-link: Glycyl lysine isopeptide (Lys-Gly) (interchain with G-Cter in ubiquitin). Positions 2156 to 2469 constitute a PI3K/PI4K catalytic domain; the sequence is IAPSLQVITS…GVELGEPAHK (314 aa). Ser2159 bears the Phosphoserine; by TBK1 mark. The tract at residues 2162–2168 is G-loop; the sequence is VITSKQR. Position 2164 is a phosphothreonine (Thr2164). The ATP site is built by Ser2165 and Gln2167. Thr2173 bears the Phosphothreonine; by PKB/AKT1 mark. Residues Leu2185, Lys2187, Glu2190, Tyr2225, Gly2238, Trp2239, Val2240, and Thr2245 each coordinate ATP. Positions 2258 to 2296 are interaction with MLST8; sequence KILLNIEHRIMLRMAPDYDHLTLMQKVEVFEHAVNNTAG. Positions 2335-2343 are catalytic loop; it reads GLGDRHPSN. A Mg(2+)-binding site is contributed by Asn2343. Residues Met2345 and Ile2356 each contribute to the ATP site. The segment at 2355-2380 is activation loop; the sequence is HIDFGDCFEVAMTREKFPEKIPFRLT. Asp2357 contributes to the Mg(2+) binding site. Position 2446 is a phosphothreonine; by RPS6KB1 (Thr2446). Ser2448 carries the phosphoserine; by RPS6KB1 modification. Residues Ser2478 and Ser2481 each carry the phosphoserine modification. The region spanning 2517-2549 is the FATC domain; it reads DTLDVPTQVELLIKQATSHENLCQCYIGWCPFW.

This sequence belongs to the PI3/PI4-kinase family. As to quaternary structure, part of the mechanistic target of rapamycin complex 1 (mTORC1) which contains MTOR, MLST8 and RPTOR. The mTORC1 complex is a 1 Md obligate dimer of two stoichiometric heterotetramers with overall dimensions of 290 A x 210 A x 135 A. It has a rhomboid shape and a central cavity, the dimeric interfaces are formed by interlocking interactions between the two MTOR and the two RPTOR subunits. The MLST8 subunit forms distal foot-like protuberances, and contacts only one MTOR within the complex, while the small AKT1S1/PRAS40 localizes to the midsection of the central core, in close proximity to RPTOR. mTORC1 associates with AKT1S1/PRAS40, which inhibits its activity by blocking MTOR substrate-recruitment site. Component of the mechanistic target of rapamycin complex 2 (mTORC2), consisting in two heterotretramers composed of MTOR, MLST8, RICTOR and MAPKAP1/SIN1. Interacts with PLPP7 and PML. Interacts with PRR5 and RICTOR; the interaction is direct within the mTORC2 complex and interaction with RICTOR is enhanced by deubiquitination of RICTOR by USP9X. mTORC1 and mTORC2 associate with DEPTOR, which regulates their activity. Interacts with WAC; WAC positively regulates MTOR activity by promoting the assembly of the TTT complex composed of TELO2, TTI1 and TTI2 and the RUVBL complex composed of RUVBL1 and RUVBL2 into the TTT-RUVBL complex which leads to the dimerization of the mTORC1 complex and its subsequent activation. Interacts with UBQLN1. Interacts with TTI1 and TELO2. Interacts with CLIP1; phosphorylates and regulates CLIP1. Interacts with NBN. Interacts with HTR6. Interacts with BRAT1. Interacts with MEAK7 (via C-terminal domain); the interaction increases upon nutrient stimulation. Interacts with TM4SF5; the interaction is positively regulated by arginine and is negatively regulated by leucine. Interacts with GPR137B. Interacts with NCKAP1L. Interacts with TPCN1 and TPCN2; the interaction is required for TPCN1 and TPCN2 sensitivity to ATP. Interacts with ATP6V1A and with CRYAB, forming a ternary complex. Interacts with SLC38A7; this interaction mediates the recruitment of mTORC1 to the lysosome and its subsequent activation. Interacts with TSPAN8. Post-translationally, autophosphorylates when part of mTORC1 or mTORC2. Phosphorylation at Ser-1261, Ser-2159 and Thr-2164 promotes autophosphorylation. Phosphorylated at Ser-2448 by RPS6KB1. Phosphorylation in the kinase domain modulates the interactions of MTOR with RPTOR and AKT1S1/PRAS40 and leads to increased intrinsic mTORC1 kinase activity. Phosphorylation at Ser-2159 by TBK1 in response to growth factors and pathogen recognition receptors promotes mTORC1 activity. Phosphorylation at Ser-2159 by TBK1 in response to EGF growth factor promotes mTORC2 activity, leading to AKT1 phosphorylation and activation. Phosphorylation at Thr-2173 in the ATP-binding region by AKT1 strongly reduces kinase activity. Ubiquitinated at Lys-2066 by the SCF(FBXO22) complex via 'Lys-27'-linked ubiquitination prevents mTORC1 substrate recruitment.

The protein resides in the lysosome membrane. Its subcellular location is the endoplasmic reticulum membrane. It localises to the golgi apparatus membrane. The protein localises to the cell membrane. It is found in the mitochondrion outer membrane. The protein resides in the cytoplasm. Its subcellular location is the nucleus. It localises to the PML body. The protein localises to the microsome membrane. It is found in the cytoplasmic vesicle. The protein resides in the phagosome. The catalysed reaction is L-seryl-[protein] + ATP = O-phospho-L-seryl-[protein] + ADP + H(+). The enzyme catalyses L-threonyl-[protein] + ATP = O-phospho-L-threonyl-[protein] + ADP + H(+). It carries out the reaction L-tyrosyl-[protein] + ATP = O-phospho-L-tyrosyl-[protein] + ADP + H(+). With respect to regulation, the mTORC1 complex is activated in response to nutrients, growth factors or amino acids: activation requires relocalization of the mTORC1 complex to lysosomes that is mediated by the Ragulator complex, SLC38A9, and the Rag GTPases RagA/RRAGA, RagB/RRAGB, RagC/RRAGC and RagD/RRAGD. Activation of mTORC1 by growth factors such as insulin involves AKT1-mediated phosphorylation of TSC1-TSC2, which leads to the activation of the RHEB GTPase a potent activator of the protein kinase activity of mTORC1. Insulin-stimulated and amino acid-dependent phosphorylation at Ser-1261 promotes autophosphorylation and the activation of mTORC1. On the other hand, low cellular energy levels can inhibit mTORC1 through activation of PRKAA1 while hypoxia inhibits mTORC1 through a REDD1-dependent mechanism which may also require PRKAA1. The kinase activity of MTOR within the mTORC1 complex is positively regulated by MLST8. The kinase activity of MTOR is inhibited by DEPTOR and AKT1S1. The non-canonical mTORC1 complex is independent of the RHEB GTPase and specifically mediates phosphorylation of MiT/TFE factors TFEB and TFE3 but not other mTORC1 substrates: it is activated by FLCN, which activates Rag GTPases RagC/RRAGC and RagD/RRAGD. MTOR is the target of the immunosuppressive and anti-cancer drug rapamycin which acts in complex with FKBP1A/FKBP12, and specifically inhibits its kinase activity. mTORC2 is also activated by growth factors, but seems to be nutrient-insensitive. mTORC2 associates and is directly activated by ribosomes. mTORC2 may also be regulated by RHEB but in an indirect manner through the PI3K signaling pathway. In terms of biological role, serine/threonine protein kinase which is a central regulator of cellular metabolism, growth and survival in response to hormones, growth factors, nutrients, energy and stress signals. MTOR directly or indirectly regulates the phosphorylation of at least 800 proteins. Functions as part of 2 structurally and functionally distinct signaling complexes mTORC1 and mTORC2 (mTOR complex 1 and 2). In response to nutrients, growth factors or amino acids, mTORC1 is recruited to the lysosome membrane and promotes protein, lipid and nucleotide synthesis by phosphorylating key regulators of mRNA translation and ribosome synthesis. This includes phosphorylation of EIF4EBP1 and release of its inhibition toward the elongation initiation factor 4E (eiF4E). Moreover, phosphorylates and activates RPS6KB1 and RPS6KB2 that promote protein synthesis by modulating the activity of their downstream targets including ribosomal protein S6, eukaryotic translation initiation factor EIF4B, and the inhibitor of translation initiation PDCD4. Stimulates the pyrimidine biosynthesis pathway, both by acute regulation through RPS6KB1-mediated phosphorylation of the biosynthetic enzyme CAD, and delayed regulation, through transcriptional enhancement of the pentose phosphate pathway which produces 5-phosphoribosyl-1-pyrophosphate (PRPP), an allosteric activator of CAD at a later step in synthesis, this function is dependent on the mTORC1 complex. Regulates ribosome synthesis by activating RNA polymerase III-dependent transcription through phosphorylation and inhibition of MAF1 an RNA polymerase III-repressor. Activates dormant ribosomes by mediating phosphorylation of SERBP1, leading to SERBP1 inactivation and reactivation of translation. In parallel to protein synthesis, also regulates lipid synthesis through SREBF1/SREBP1 and LPIN1. To maintain energy homeostasis mTORC1 may also regulate mitochondrial biogenesis through regulation of PPARGC1A. In the same time, mTORC1 inhibits catabolic pathways: negatively regulates autophagy through phosphorylation of ULK1. Under nutrient sufficiency, phosphorylates ULK1 at 'Ser-758', disrupting the interaction with AMPK and preventing activation of ULK1. Also prevents autophagy through phosphorylation of the autophagy inhibitor DAP. Also prevents autophagy by phosphorylating RUBCNL/Pacer under nutrient-rich conditions. Prevents autophagy by mediating phosphorylation of AMBRA1, thereby inhibiting AMBRA1 ability to mediate ubiquitination of ULK1 and interaction between AMBRA1 and PPP2CA. mTORC1 exerts a feedback control on upstream growth factor signaling that includes phosphorylation and activation of GRB10 a INSR-dependent signaling suppressor. Among other potential targets mTORC1 may phosphorylate CLIP1 and regulate microtubules. The mTORC1 complex is inhibited in response to starvation and amino acid depletion. The non-canonical mTORC1 complex, which acts independently of RHEB, specifically mediates phosphorylation of MiT/TFE factors TFEB and TFE3 in the presence of nutrients, promoting their cytosolic retention and inactivation. Upon starvation or lysosomal stress, inhibition of mTORC1 induces dephosphorylation and nuclear translocation of TFEB and TFE3, promoting their transcription factor activity. The mTORC1 complex regulates pyroptosis in macrophages by promoting GSDMD oligomerization. MTOR phosphorylates RPTOR which in turn inhibits mTORC1. As part of the mTORC2 complex, MTOR transduces signals from growth factors to pathways involved in proliferation, cytoskeletal organization, lipogenesis and anabolic output. In response to growth factors, mTORC2 phosphorylates and activates AGC protein kinase family members, including AKT (AKT1, AKT2 and AKT3), PKC (PRKCA, PRKCB and PRKCE) and SGK1. In contrast to mTORC1, mTORC2 is nutrient-insensitive. mTORC2 plays a critical role in AKT1 activation by mediating phosphorylation of different sites depending on the context, such as 'Thr-450', 'Ser-473', 'Ser-477' or 'Thr-479', facilitating the phosphorylation of the activation loop of AKT1 on 'Thr-308' by PDPK1/PDK1 which is a prerequisite for full activation. mTORC2 also regulates the phosphorylation of SGK1 at 'Ser-422'. mTORC2 may regulate the actin cytoskeleton, through phosphorylation of PRKCA, PXN and activation of the Rho-type guanine nucleotide exchange factors RHOA and RAC1A or RAC1B. The mTORC2 complex also phosphorylates various proteins involved in insulin signaling, such as FBXW8 and IGF2BP1. May also regulate insulin signaling by acting as a tyrosine protein kinase that catalyzes phosphorylation of IGF1R and INSR. Regulates osteoclastogenesis by adjusting the expression of CEBPB isoforms. Plays an important regulatory role in the circadian clock function; regulates period length and rhythm amplitude of the suprachiasmatic nucleus (SCN) and liver clocks. The protein is Serine/threonine-protein kinase mTOR of Mus musculus (Mouse).